The following is a 75-amino-acid chain: MSSGGLLLLLGLLTLWAELIPVSGQDHPKKPGLCPPRPQKPPCVRECKNDWSCPGEQKCCRYGCIFECRDPIFVK.

Positions 1-24 (MSSGGLLLLLGLLTLWAELIPVSG) are cleaved as a signal peptide. The WAP domain occupies 27-72 (HPKKPGLCPPRPQKPPCVRECKNDWSCPGEQKCCRYGCIFECRDPI). 4 cysteine pairs are disulfide-bonded: cysteine 34–cysteine 60, cysteine 43–cysteine 64, cysteine 47–cysteine 59, and cysteine 53–cysteine 68.

It belongs to the venom waprin family. As to expression, expressed by the venom gland.

It is found in the secreted. Damages membranes of susceptible bacteria. Has no hemolytic activity. Not toxic to mice. Does not inhibit the proteinases elastase and cathepsin G. This is Stewaprin-a from Hoplocephalus stephensii (Stephens's banded snake).